Reading from the N-terminus, the 286-residue chain is Myb family transcription factor PHL7 (286 aa).

The HTH myb-type domain maps to 12–72 (HASKQRLRWT…HLQKYRLAKY (61 aa)). A DNA-binding region (H-T-H motif) is located at residues 43–68 (PKGVLRVMGVQGLTIYHVKSHLQKYR). A disordered region spans residues 74–97 (PDSSSEGKKTDKKESGDMLSGLDG). Over residues 78-89 (SEGKKTDKKESG) the composition is skewed to basic and acidic residues. The stretch at 104–124 (TEALKLQMEVQKRLHEQLEVQ) forms a coiled coil. An LHEQLE motif is present at residues 117–122 (LHEQLE). The tract at residues 152-227 (LGEPSAPVTG…TGEERLSKKP (76 aa)) is disordered.

Belongs to the MYB-CC family.

The protein resides in the nucleus. The sequence is that of Myb family transcription factor PHL7 from Arabidopsis thaliana (Mouse-ear cress).